The chain runs to 345 residues: Biotin synthase (345 aa).

The Radical SAM core domain maps to 38-256 (QQVQVSTLLS…IAVARIMMPS (219 aa)). 3 residues coordinate [4Fe-4S] cluster: cysteine 53, cysteine 57, and cysteine 60. 4 residues coordinate [2Fe-2S] cluster: cysteine 97, cysteine 128, cysteine 188, and arginine 260.

The protein belongs to the radical SAM superfamily. Biotin synthase family. As to quaternary structure, homodimer. Requires [4Fe-4S] cluster as cofactor. The cofactor is [2Fe-2S] cluster.

It carries out the reaction (4R,5S)-dethiobiotin + (sulfur carrier)-SH + 2 reduced [2Fe-2S]-[ferredoxin] + 2 S-adenosyl-L-methionine = (sulfur carrier)-H + biotin + 2 5'-deoxyadenosine + 2 L-methionine + 2 oxidized [2Fe-2S]-[ferredoxin]. The protein operates within cofactor biosynthesis; biotin biosynthesis; biotin from 7,8-diaminononanoate: step 2/2. Functionally, catalyzes the conversion of dethiobiotin (DTB) to biotin by the insertion of a sulfur atom into dethiobiotin via a radical-based mechanism. In Photorhabdus laumondii subsp. laumondii (strain DSM 15139 / CIP 105565 / TT01) (Photorhabdus luminescens subsp. laumondii), this protein is Biotin synthase.